The primary structure comprises 237 residues: Sugar fermentation stimulation protein homolog (237 aa).

This sequence belongs to the SfsA family.

This chain is Sugar fermentation stimulation protein homolog, found in Pseudomonas putida (strain W619).